We begin with the raw amino-acid sequence, 237 residues long: Ribonuclease PH (237 aa).

Residues Arg-86 and 124-126 each bind phosphate; that span reads GTR.

Belongs to the RNase PH family. In terms of assembly, homohexameric ring arranged as a trimer of dimers.

It catalyses the reaction tRNA(n+1) + phosphate = tRNA(n) + a ribonucleoside 5'-diphosphate. Its function is as follows. Phosphorolytic 3'-5' exoribonuclease that plays an important role in tRNA 3'-end maturation. Removes nucleotide residues following the 3'-CCA terminus of tRNAs; can also add nucleotides to the ends of RNA molecules by using nucleoside diphosphates as substrates, but this may not be physiologically important. Probably plays a role in initiation of 16S rRNA degradation (leading to ribosome degradation) during starvation. In Myxococcus xanthus (strain DK1622), this protein is Ribonuclease PH.